The sequence spans 449 residues: Guanine/hypoxanthine permease GhxP (449 aa).

Over 1-25 (MSTPSARTGGSLDAWFKISQRGSTV) the chain is Cytoplasmic. A helical membrane pass occupies residues 26-49 (RQEVVAGLTTFLAMVYSVIVVPGM). Residues 50–59 (LGKAGFPPAA) lie on the Periplasmic side of the membrane. A helical membrane pass occupies residues 60 to 78 (VFVATCLVAGLGSIVMGLW). Residues 79–80 (AN) are Cytoplasmic-facing. A discontinuously helical membrane pass occupies residues 81–97 (LPLAIGCAISLTAFTAF). Residues 98-109 (SLVLGQHISVPV) lie on the Periplasmic side of the membrane. A helical transmembrane segment spans residues 110 to 129 (ALGAVFLMGVLFTVISATGI). At 130–141 (RSWILRNLPHGV) the chain is on the cytoplasmic side. Residues 142–162 (AHGTGIGIGLFLLLIAANGVG) traverse the membrane as a helical segment. Topologically, residues 163–180 (LVIKNPLDGLPVALGDFA) are periplasmic. Residues 181 to 198 (TFPVIMSLVGLAVIIGLE) traverse the membrane as a helical segment. The Cytoplasmic segment spans residues 199–202 (KLKV). The chain crosses the membrane as a helical span at residues 203–222 (PGGILLTIIGISIVGLIFDP). At 223–254 (NVHFSGVFAMPSLSDENGNSLIGSLDIMGALN) the chain is on the periplasmic side. The chain crosses the membrane as a helical span at residues 255–283 (PVVLPSVLALVMTAVFDATGTIRAVAGQA). The Cytoplasmic segment spans residues 284 to 296 (NLLDKDGQIIDGG). Residues 297–312 (KALTTDSMSSVFSGLV) traverse the membrane as a helical segment. Topologically, residues 313-314 (GA) are periplasmic. A discontinuously helical transmembrane segment spans residues 315–330 (APAAVYIESAAGTAAG). The Cytoplasmic portion of the chain corresponds to 331-334 (GKTG). The chain crosses the membrane as a helical span at residues 335–349 (LTAITVGVLFLLILF). Topologically, residues 350–360 (LSPLSYLVPGY) are periplasmic. Residues 361–380 (ATAPALMYVGLLMLSNVAKI) form a helical membrane-spanning segment. At 381-385 (DFADF) the chain is on the cytoplasmic side. The discontinuously helical intramembrane region spans 386 to 421 (VDAMAGLVTAVFIVLTCNIVTGIMIGFATLVIGRLV). Over 422–449 (SGEWRKLNIGTVVIAVALVTFYAGGWAI) the chain is Cytoplasmic.

The protein belongs to the nucleobase:cation symporter-2 (NCS2) (TC 2.A.40) family. Azg-like subfamily.

It is found in the cell inner membrane. Functionally, high-affinity transporter for guanine and hypoxanthine. The protein is Guanine/hypoxanthine permease GhxP (ghxP) of Escherichia coli O157:H7.